A 459-amino-acid polypeptide reads, in one-letter code: Argininosuccinate lyase (459 aa).

Belongs to the lyase 1 family. Argininosuccinate lyase subfamily.

It is found in the cytoplasm. The enzyme catalyses 2-(N(omega)-L-arginino)succinate = fumarate + L-arginine. Its pathway is amino-acid biosynthesis; L-arginine biosynthesis; L-arginine from L-ornithine and carbamoyl phosphate: step 3/3. This Ruminiclostridium cellulolyticum (strain ATCC 35319 / DSM 5812 / JCM 6584 / H10) (Clostridium cellulolyticum) protein is Argininosuccinate lyase.